The primary structure comprises 269 residues: MDKLILGRYIPGNSIIHRLDPRSKLLAMIIYIIIIFWANNVVTNLLLLAFTLLLIFLSQIKWSFFFNGVKPMIGIILFTTLFQVFFTQGGSVLFQLGIIKITSLGLSQAILIFMRFVLIIFFSTLLTLTTTPLSLSDAVEALLKPLVRFKVPAHEIGLMLSLSLRFVPTLMDDTTRIMNAQKARGVDFGEGNLIQKVKSIIPILIPLFASSFKRADALAIAMEARGYQGGDSRTKYRLLSWQLKDTLAIILVVILGIFLFCLKSPSRLT.

The next 5 membrane-spanning stretches (helical) occupy residues Met-28 to Leu-48, Ala-49 to Val-69, Ile-73 to Leu-93, Ala-109 to Thr-129, and Thr-246 to Ser-266.

It belongs to the energy-coupling factor EcfT family. Forms a stable energy-coupling factor (ECF) transporter complex composed of 2 membrane-embedded substrate-binding proteins (S component), 2 ATP-binding proteins (A component) and 2 transmembrane proteins (T component). May be able to interact with more than 1 S component at a time.

The protein localises to the cell membrane. In terms of biological role, transmembrane (T) component of an energy-coupling factor (ECF) ABC-transporter complex. Unlike classic ABC transporters this ECF transporter provides the energy necessary to transport a number of different substrates. In Streptococcus equi subsp. equi (strain 4047), this protein is Energy-coupling factor transporter transmembrane protein EcfT.